The primary structure comprises 72 residues: MAKEDVIEMQGTVLDTLPNTMFRVELENGHVVTAHISGKMRKNYIRILTGDKVTVEMTPYDLSKGRIVFRAR.

Residues 1–72 (MAKEDVIEMQ…SKGRIVFRAR (72 aa)) form the S1-like domain.

The protein belongs to the IF-1 family. In terms of assembly, component of the 30S ribosomal translation pre-initiation complex which assembles on the 30S ribosome in the order IF-2 and IF-3, IF-1 and N-formylmethionyl-tRNA(fMet); mRNA recruitment can occur at any time during PIC assembly.

It is found in the cytoplasm. Functionally, one of the essential components for the initiation of protein synthesis. Stabilizes the binding of IF-2 and IF-3 on the 30S subunit to which N-formylmethionyl-tRNA(fMet) subsequently binds. Helps modulate mRNA selection, yielding the 30S pre-initiation complex (PIC). Upon addition of the 50S ribosomal subunit IF-1, IF-2 and IF-3 are released leaving the mature 70S translation initiation complex. The chain is Translation initiation factor IF-1 from Vibrio cholerae serotype O1 (strain ATCC 39541 / Classical Ogawa 395 / O395).